The chain runs to 332 residues: Beta-ketoacyl-[acyl-carrier-protein] synthase III (332 aa).

Active-site residues include C114 and H255. The interval 256-260 (QANLR) is ACP-binding. N285 is a catalytic residue.

This sequence belongs to the thiolase-like superfamily. FabH family. Homodimer.

The protein localises to the cytoplasm. It carries out the reaction malonyl-[ACP] + acetyl-CoA + H(+) = 3-oxobutanoyl-[ACP] + CO2 + CoA. It participates in lipid metabolism; fatty acid biosynthesis. Functionally, catalyzes the condensation reaction of fatty acid synthesis by the addition to an acyl acceptor of two carbons from malonyl-ACP. Catalyzes the first condensation reaction which initiates fatty acid synthesis and may therefore play a role in governing the total rate of fatty acid production. Possesses both acetoacetyl-ACP synthase and acetyl transacylase activities. Its substrate specificity determines the biosynthesis of branched-chain and/or straight-chain of fatty acids. The protein is Beta-ketoacyl-[acyl-carrier-protein] synthase III of Sulfurimonas denitrificans (strain ATCC 33889 / DSM 1251) (Thiomicrospira denitrificans (strain ATCC 33889 / DSM 1251)).